Consider the following 454-residue polypeptide: tRNA modification GTPase MnmE (454 aa).

Residues Arg-26, Glu-84, and Lys-123 each coordinate (6S)-5-formyl-5,6,7,8-tetrahydrofolate. Residues 219-378 (GLQVVIAGKP…LVDAITAHAG (160 aa)) enclose the TrmE-type G domain. Residue Asn-229 participates in K(+) binding. Residues 229 to 234 (NAGKSS), 248 to 254 (TDIAGTT), and 273 to 276 (DTAG) each bind GTP. Ser-233 serves as a coordination point for Mg(2+). The K(+) site is built by Thr-248, Ile-250, and Thr-253. Thr-254 is a binding site for Mg(2+). Lys-454 is a binding site for (6S)-5-formyl-5,6,7,8-tetrahydrofolate.

Belongs to the TRAFAC class TrmE-Era-EngA-EngB-Septin-like GTPase superfamily. TrmE GTPase family. As to quaternary structure, homodimer. Heterotetramer of two MnmE and two MnmG subunits. It depends on K(+) as a cofactor.

Its subcellular location is the cytoplasm. Functionally, exhibits a very high intrinsic GTPase hydrolysis rate. Involved in the addition of a carboxymethylaminomethyl (cmnm) group at the wobble position (U34) of certain tRNAs, forming tRNA-cmnm(5)s(2)U34. This Acinetobacter baumannii (strain ATCC 17978 / DSM 105126 / CIP 53.77 / LMG 1025 / NCDC KC755 / 5377) protein is tRNA modification GTPase MnmE.